The chain runs to 172 residues: Large ribosomal subunit protein uL10 (172 aa).

The protein belongs to the universal ribosomal protein uL10 family. As to quaternary structure, part of the ribosomal stalk of the 50S ribosomal subunit. The N-terminus interacts with L11 and the large rRNA to form the base of the stalk. The C-terminus forms an elongated spine to which L12 dimers bind in a sequential fashion forming a multimeric L10(L12)X complex.

Its function is as follows. Forms part of the ribosomal stalk, playing a central role in the interaction of the ribosome with GTP-bound translation factors. The chain is Large ribosomal subunit protein uL10 from Chlamydia trachomatis serovar L2 (strain ATCC VR-902B / DSM 19102 / 434/Bu).